Reading from the N-terminus, the 703-residue chain is Calpain-8 (703 aa).

One can recognise a Calpain catalytic domain in the interval 45 to 344; that stretch reads LFKDPEFPAC…FSRLEICNLS (300 aa). Residues Cys-105, His-262, and Asn-286 contribute to the active site. Positions 355–512 are domain III; the sequence is KWNLVLFNGR…VFSEKKAQAL (158 aa). Residues 513 to 531 form a linker region; sequence EIGDAVPGDPHEPHPRDMD. 4 EF-hand domains span residues 531-566, 575-610, 605-640, and 670-703; these read DGED…LLSK, FNIN…ICKY, LKIC…AGFT, and IRLE…RALV. The domain IV stretch occupies residues 532–703; that stretch reads GEDEHFWSLS…LAEWLCRALV (172 aa). Ca(2+)-binding residues include Asp-588, Asp-590, Thr-592, Ser-594, Glu-599, Asp-618, Ser-620, Thr-624, and Glu-629.

This sequence belongs to the peptidase C2 family. Monomer and homooligomer. Interacts with COPS1/GPS1, COPB1, EYA2, NME2, NME4 and TOMM70. Ca(2+) is required as a cofactor. Post-translationally, undergoes autolytic cleavage between Ala-5 and Ala-6 which gives rise to fragments extending from Ala-6 to the C-terminus, Ala-6 to the EF-hand 2 domain and from Ala-6 to the beginning of domain III. In terms of tissue distribution, predominantly expressed in the stomach. Localizes strictly to the surface mucus cells in the gastric epithelium and the mucus-secreting goblet cells in the duodenum.

The protein localises to the cytoplasm. Its subcellular location is the golgi apparatus. The catalysed reaction is Broad endopeptidase specificity.. With respect to regulation, the concentration of calcium for half-maximal activity is 0.3 mM. Inhibited by calpastatin and calpeptin. In terms of biological role, calcium-regulated non-lysosomal thiol-protease. Involved in membrane trafficking in the gastric surface mucus cells (pit cells) and may involve the membrane trafficking of mucus cells via interactions with coat protein. Proteolytically cleaves the beta-subunit of coatomer complex. This is Calpain-8 (Capn8) from Mus musculus (Mouse).